The chain runs to 511 residues: Histidine ammonia-lyase (511 aa).

The 5-imidazolinone (Ala-Gly) cross-link spans alanine 142–glycine 144. Serine 143 carries the post-translational modification 2,3-didehydroalanine (Ser).

This sequence belongs to the PAL/histidase family. Post-translationally, contains an active site 4-methylidene-imidazol-5-one (MIO), which is formed autocatalytically by cyclization and dehydration of residues Ala-Ser-Gly.

Its subcellular location is the cytoplasm. The enzyme catalyses L-histidine = trans-urocanate + NH4(+). Its pathway is amino-acid degradation; L-histidine degradation into L-glutamate; N-formimidoyl-L-glutamate from L-histidine: step 1/3. The sequence is that of Histidine ammonia-lyase from Brucella canis (strain ATCC 23365 / NCTC 10854 / RM-666).